Here is a 168-residue protein sequence, read N- to C-terminus: Large ribosomal subunit protein uL5 (168 aa).

It belongs to the universal ribosomal protein uL5 family. In terms of assembly, part of the 50S ribosomal subunit; contacts the 5S rRNA and probably tRNA. Forms a bridge to the 30S subunit in the 70S ribosome.

Its function is as follows. This is one of the proteins that bind and probably mediate the attachment of the 5S RNA into the large ribosomal subunit, where it forms part of the central protuberance. In the 70S ribosome it contacts protein S13 of the 30S subunit (bridge B1b), connecting the 2 subunits; this bridge is implicated in subunit movement. May contact the P site tRNA; the 5S rRNA and some of its associated proteins might help stabilize positioning of ribosome-bound tRNAs. In Methanospirillum hungatei JF-1 (strain ATCC 27890 / DSM 864 / NBRC 100397 / JF-1), this protein is Large ribosomal subunit protein uL5.